The following is a 502-amino-acid chain: Nostrin (502 aa).

An F-BAR domain is found at 1 to 260; it reads MRDPLTDCSY…AISKVDVEKD (260 aa). S114 carries the phosphoserine modification. Coiled coils occupy residues 160–230 and 305–335; these read SMTQ…LNQY and KLWR…SSAS. In terms of domain architecture, REM-1 spans 292 to 372; the sequence is PMDKERRKSL…SYKLSTVLAD (81 aa). Positions 413–437 are disordered; the sequence is KAESKAPAGEQNNPSSSRPGSSVSQ. The span at 423 to 437 shows a compositional bias: low complexity; it reads QNNPSSSRPGSSVSQ. The 60-residue stretch at 438–497 folds into the SH3 domain; sequence GNNQLCKALYTFQARQDDELNLEKGDIVTIHEKKEEGWWFGSLNGKKGHFPAAYVEELPP. S479 is subject to Phosphoserine.

In terms of assembly, homotrimer. Interacts with DAB2. Interacts with NOS3, WASL and CAV1. Interacts (via SH3 domain) with DNM2; this interaction allows the recruitment of NOS3 to dynamin-positive structures. Over-expressed in brain microcapillaries from spontaneously hypertensive rats.

Its subcellular location is the cell membrane. It localises to the cytoplasmic vesicle. The protein localises to the cytoplasm. The protein resides in the cytoskeleton. It is found in the nucleus. Functionally, multivalent adapter protein which may decrease NOS3 activity by inducing its translocation away from the plasma membrane. This Rattus norvegicus (Rat) protein is Nostrin.